The following is a 434-amino-acid chain: Enolase (434 aa).

(2R)-2-phosphoglycerate is bound at residue Q165. Residue E207 is the Proton donor of the active site. Mg(2+)-binding residues include D244, E291, and D318. Residues K343, R372, S373, and K394 each contribute to the (2R)-2-phosphoglycerate site. K343 acts as the Proton acceptor in catalysis.

Belongs to the enolase family. Mg(2+) serves as cofactor.

It is found in the cytoplasm. Its subcellular location is the secreted. The protein localises to the cell surface. The enzyme catalyses (2R)-2-phosphoglycerate = phosphoenolpyruvate + H2O. It functions in the pathway carbohydrate degradation; glycolysis; pyruvate from D-glyceraldehyde 3-phosphate: step 4/5. Its function is as follows. Catalyzes the reversible conversion of 2-phosphoglycerate (2-PG) into phosphoenolpyruvate (PEP). It is essential for the degradation of carbohydrates via glycolysis. The protein is Enolase of Staphylococcus epidermidis (strain ATCC 35984 / DSM 28319 / BCRC 17069 / CCUG 31568 / BM 3577 / RP62A).